Consider the following 332-residue polypeptide: RNA polymerase principal sigma factor HrdD (332 aa).

The interval 1–25 (MATRAVARRQSATGETADSASSVRA) is disordered. Residues 10 to 22 (QSATGETADSASS) are compositionally biased toward polar residues. The short motif at 124–137 (DLIQEGNAGLVRAV) is the Polymerase core binding element. Positions 294 to 313 (LTEVGKEHGLTRERIRQIEK) form a DNA-binding region, H-T-H motif.

It belongs to the sigma-70 factor family.

In terms of biological role, sigma factors are initiation factors that promote the attachment of RNA polymerase to specific initiation sites and are then released. This Streptomyces viridifaciens protein is RNA polymerase principal sigma factor HrdD (hrdD).